The primary structure comprises 304 residues: UDP-3-O-acyl-N-acetylglucosamine deacetylase (304 aa).

The Zn(2+) site is built by His78, His237, and Asp241. Catalysis depends on His264, which acts as the Proton donor.

It belongs to the LpxC family. Requires Zn(2+) as cofactor.

The catalysed reaction is a UDP-3-O-[(3R)-3-hydroxyacyl]-N-acetyl-alpha-D-glucosamine + H2O = a UDP-3-O-[(3R)-3-hydroxyacyl]-alpha-D-glucosamine + acetate. It participates in glycolipid biosynthesis; lipid IV(A) biosynthesis; lipid IV(A) from (3R)-3-hydroxytetradecanoyl-[acyl-carrier-protein] and UDP-N-acetyl-alpha-D-glucosamine: step 2/6. Its function is as follows. Catalyzes the hydrolysis of UDP-3-O-myristoyl-N-acetylglucosamine to form UDP-3-O-myristoylglucosamine and acetate, the committed step in lipid A biosynthesis. This Xylella fastidiosa (strain Temecula1 / ATCC 700964) protein is UDP-3-O-acyl-N-acetylglucosamine deacetylase.